A 396-amino-acid polypeptide reads, in one-letter code: Elongation factor Tu (396 aa).

A tr-type G domain is found at 10-206 (KPHVNVGTIG…AMDEYIPTPE (197 aa)). The tract at residues 19 to 26 (GHVDHGKT) is G1. 19–26 (GHVDHGKT) is a GTP binding site. Position 26 (threonine 26) interacts with Mg(2+). The tract at residues 60 to 64 (GITIA) is G2. Residues 81–84 (DCPG) are G3. GTP contacts are provided by residues 81–85 (DCPGH) and 136–139 (NKAD). Residues 136–139 (NKAD) are G4. A G5 region spans residues 174 to 176 (SAL).

The protein belongs to the TRAFAC class translation factor GTPase superfamily. Classic translation factor GTPase family. EF-Tu/EF-1A subfamily. Monomer.

The protein localises to the cytoplasm. The catalysed reaction is GTP + H2O = GDP + phosphate + H(+). Functionally, GTP hydrolase that promotes the GTP-dependent binding of aminoacyl-tRNA to the A-site of ribosomes during protein biosynthesis. This Alkalilimnicola ehrlichii (strain ATCC BAA-1101 / DSM 17681 / MLHE-1) protein is Elongation factor Tu.